The chain runs to 695 residues: MFLKKLLKGSSNSTRPRGATFNGIYTGGDNLSGSSEQNYNNSLTTSTKQTNRQTLLLKSMEYINGSSTYYGNYMDYFDIPVQLFVGGEQSEIYPMLSYNQSLKSLILDFNKITEIPDCITLLPNLNHLSLAANQLTHVPEFLSQLKSLETFEIGINQFTCFPLNVCKIKSLTSLHLETNNIKSLPEEFLNLVNLKDLSLFDNQLKEIPDSLPNNIEKLNLGCNDISSSKSDSLIRISHSLTTLNLSENKIEELDESLSCLVNVKTLMLDCNMIKVIPGSVLGSWKSLVTLNLPHNLISDLPPEVILLSNLRIIDLRGNNFENCKKLIPTESSTPISFKIEDFIQNKERINSLKFDNIEILPTTNSIINSNNNNYEVITTTATTKNIIENKEDNDEKLLNNSTISIVLDSNNKSENNEINENNQLLTTDDDYNTDKNDSFTESEDIIKKIQIELDSIEIQQKQLLLKQIKLKEKMKKEKNKLFKFQQQEIIHQEQLPQSKPENEKLTNIPEQQQKQQQQQQQQEVQQPIITLTKSTSSKVEVEMIVPNQLIFWQSIVPDLIIDKLYLGCRECAMNKSWLKDNNVTHILTVANFKPLYPDLFKYLIINIEDVDEANIYQHFKEMNAFIDEGREKGGVLIHCRAGVSRSASATMAFIMMKNSLKFQEAFDITIKGRPRIYPNIGFINQLKKFEKDLFK.

10 LRR repeats span residues 101–122 (SLKS…ITLL), 124–145 (NLNH…LSQL), 147–167 (SLET…NVCK), 170–191 (SLTS…FLNL), 193–214 (NLKD…LPNN), 215–235 (IEKL…SLIR), 239–260 (SLTT…LSCL), 262–283 (NVKT…VLGS), 286–307 (SLVT…VILL), and 309–330 (NLRI…IPTE). The segment covering 413 to 426 (SENNEINENNQLLT) has biased composition (low complexity). Disordered stretches follow at residues 413–438 (SENN…KNDS) and 492–519 (QEQL…QQQQ). The Tyrosine-protein phosphatase domain maps to 556–695 (VPDLIIDKLY…LKKFEKDLFK (140 aa)). Catalysis depends on Cys639, which acts as the Phosphocysteine intermediate.

Belongs to the protein-tyrosine phosphatase family. Non-receptor class dual specificity subfamily.

It catalyses the reaction O-phospho-L-tyrosyl-[protein] + H2O = L-tyrosyl-[protein] + phosphate. The catalysed reaction is O-phospho-L-seryl-[protein] + H2O = L-seryl-[protein] + phosphate. It carries out the reaction O-phospho-L-threonyl-[protein] + H2O = L-threonyl-[protein] + phosphate. Functionally, probable phosphatase with dual specificity toward Ser/Thr and Tyr-containing proteins. In Dictyostelium discoideum (Social amoeba), this protein is MAP kinase phosphatase with leucine-rich repeats protein 2 (mpl2).